Reading from the N-terminus, the 373-residue chain is Asporin (373 aa).

The N-terminal stretch at 1–15 (MKEYVMLLLLAVCSA) is a signal peptide. The propeptide occupies 16-32 (KPFFSPSHTALKNMMLK). O-linked (GalNAc...) serine glycosylation is present at serine 48. An LRRNT domain is found at 59-95 (FFPFDLFPTCPFGCQCYSRVVHCSDLGLTSVPNNIPF). 2 disulfides stabilise this stretch: cysteine 68–cysteine 74 and cysteine 72–cysteine 81. LRR repeat units lie at residues 96–117 (DTRM…DFKG), 120–141 (SLYA…TFLT), 144–166 (KLRR…PKSL), 167–186 (AELR…TFKG), 189–212 (ALHV…AFEG), 235–255 (TLLE…EDLK), 259–280 (ELQR…TFAN), 283–305 (RVRE…QELK), 306–327 (YLQI…DFCP), 328–349 (TVPK…PMKY), and 350–373 (WEIQ…NVGK). An interaction with TGFB1 region spans residues 159–205 (PLNLPKSLAELRIHDNKVKKIQKDTFKGMNALHVLEMSANPLENNGI). An N-linked (GlcNAc...) asparagine glycan is attached at asparagine 275. Cysteine 326 and cysteine 359 are disulfide-bonded.

The protein belongs to the small leucine-rich proteoglycan (SLRP) family. SLRP class I subfamily. Interacts with type I collagen. DCN can inhibit collagen binding. Interacts with TGFB1, TGFB2 and TGFB3. DCN, BGN, and FMOD inhibit binding to TGFB1. Interacts with BMP2. Interacts in vitro with type II collagen. In terms of tissue distribution, higher expression in heart, also detected in kidney, stomach, testes, and skin but only weakly in lung, skeletal muscle, small intestine, and thymus. Expressed specifically and predominantly in the periodontal ligament (PDL). During tooth development, strong expression is seen in the dental follicle, which is the progenitor tissue that forms cementum, alveolar bone, and the PDL. Expressed in the perichondria of the maxilla, mandible, vertebrae, and long bones. Predominantly expressed in the perichondrium/periosteum of long bones (at protein level).

The protein resides in the secreted. Its subcellular location is the extracellular space. The protein localises to the extracellular matrix. Its function is as follows. Binds calcium and plays a role in osteoblast-driven collagen biomineralization activity. Critical regulator of TGF-beta in articular cartilage and plays an essential role in cartilage homeostasis and osteoarthritis (OA) pathogenesis. Negatively regulates chondrogenesis in the articular cartilage by blocking the TGF-beta/receptor interaction on the cell surface and inhibiting the canonical TGF-beta/Smad signal. Negatively regulates periodontal ligament (PDL) differentiation and mineralization to ensure that the PDL is not ossified and to maintain homeostasis of the tooth-supporting system. Inhibits BMP2-induced cytodifferentiation of PDL cells by preventing its binding to BMPR1B/BMP type-1B receptor, resulting in inhibition of BMP-dependent activation of SMAD proteins. Inhibits the interaction between TGFB1 and TGF-beta receptor type II in the presence of heparin/heparan sulfate in vitro. This is Asporin (Aspn) from Mus musculus (Mouse).